A 160-amino-acid polypeptide reads, in one-letter code: SsrA-binding protein (160 aa).

The tract at residues 131–160 (KKEYDKRHTERERDSDRELQRAVRTKGKDD) is disordered.

Belongs to the SmpB family.

The protein resides in the cytoplasm. Required for rescue of stalled ribosomes mediated by trans-translation. Binds to transfer-messenger RNA (tmRNA), required for stable association of tmRNA with ribosomes. tmRNA and SmpB together mimic tRNA shape, replacing the anticodon stem-loop with SmpB. tmRNA is encoded by the ssrA gene; the 2 termini fold to resemble tRNA(Ala) and it encodes a 'tag peptide', a short internal open reading frame. During trans-translation Ala-aminoacylated tmRNA acts like a tRNA, entering the A-site of stalled ribosomes, displacing the stalled mRNA. The ribosome then switches to translate the ORF on the tmRNA; the nascent peptide is terminated with the 'tag peptide' encoded by the tmRNA and targeted for degradation. The ribosome is freed to recommence translation, which seems to be the essential function of trans-translation. The protein is SsrA-binding protein of Pseudomonas syringae pv. tomato (strain ATCC BAA-871 / DC3000).